Consider the following 122-residue polypeptide: MARIAGVNIPTAKRVVIALTYIHGIGPKFAQEIMEKVGLSADRRVHQLTDAEVLAIRETIDRDYQVEGDLRRDTAMNIKRLMDLGCYRGLRHRRGLPVRGQRTHTNARTRKGPAKAIAGKKK.

A disordered region spans residues 99–122 (RGQRTHTNARTRKGPAKAIAGKKK).

The protein belongs to the universal ribosomal protein uS13 family. As to quaternary structure, part of the 30S ribosomal subunit. Forms a loose heterodimer with protein S19. Forms two bridges to the 50S subunit in the 70S ribosome.

Functionally, located at the top of the head of the 30S subunit, it contacts several helices of the 16S rRNA. In the 70S ribosome it contacts the 23S rRNA (bridge B1a) and protein L5 of the 50S subunit (bridge B1b), connecting the 2 subunits; these bridges are implicated in subunit movement. Contacts the tRNAs in the A and P-sites. This chain is Small ribosomal subunit protein uS13, found in Allorhizobium ampelinum (strain ATCC BAA-846 / DSM 112012 / S4) (Agrobacterium vitis (strain S4)).